We begin with the raw amino-acid sequence, 678 residues long: Serine/threonine-protein kinase mph1 (678 aa).

Disordered regions lie at residues 39-93 (KNDT…NSAL) and 114-209 (LPST…SNSV). 2 stretches are compositionally biased toward polar residues: residues 41–66 (DTFS…SSGA) and 114–125 (LPSTNASHSEVS). The region spanning 316–607 (FIKLGVVGKG…LVHPFLNPLP (292 aa)) is the Protein kinase domain. ATP is bound by residues 322-330 (VGKGGSSMV) and Lys345. Residue Asp442 is the Proton acceptor of the active site.

The protein belongs to the protein kinase superfamily. Ser/Thr protein kinase family.

It carries out the reaction L-seryl-[protein] + ATP = O-phospho-L-seryl-[protein] + ADP + H(+). The enzyme catalyses L-threonyl-[protein] + ATP = O-phospho-L-threonyl-[protein] + ADP + H(+). The catalysed reaction is L-tyrosyl-[protein] + ATP = O-phospho-L-tyrosyl-[protein] + ADP + H(+). Functionally, involved in mitotic spindle assembly checkpoint signaling, a process that delays anaphase until chromosomes are bioriented on the spindle, and in the repair of incorrect mitotic kinetochore-spindle microtubule attachments. Phosphorylates spc7/knl1 on MELT motifs; phosphorylation is required for recruitment of the BUB1-BUB3 complex to kinetochores. The polypeptide is Serine/threonine-protein kinase mph1 (Schizosaccharomyces pombe (strain 972 / ATCC 24843) (Fission yeast)).